The sequence spans 553 residues: MSERIFIGVAWPYANSQLHLGHVAGAYLPADIFARYHRTRGDEVLMVSGSDMHGTPITIRAEQEGITAAEVAERYHQRFMASWPKLGISWDFYTSTATANHARTAQEMFLSLYEKGYIYKNTVCQPFCSHCNRFLPDRYVEGTCPHCKYEGARGDQCDNCGKPLNAAELLNFRCKNCGNPPEFRETEHFFLKLSAFEEELIRWVETKTHWRTNVLNFTLRYLKEGLKDRAITRDLDWGVPLPLPGYEGKRLYVWFEAVIGYLSASKEWAASKGQPNAWQKYWGVDTKSYYFIGKDNIPFHTIIWPAMLMGKGGLNLPYDVPSNEYLTTESQKFSKSRNNAIWVDDVLSRYGVDTLRYLLSANMPESSDTDFSWREFVRRNNDELVATYGNLAQRVLTMVCRNYDNKVPEYGELDERSLTLIEKTAAMLCETDKALYNCNFREAIRLAMALAQEANRYLDEKAPWKEIKVDKAAAARSLYVAMVALSGLRVAFYPFLPESSGRLSTYLGFGSELEKEGWILKMPVVGQELTPPEPLFKKLEDSVVEEETARMGL.

Positions 12 to 22 (PYANSQLHLGH) match the 'HIGH' region motif. Positions 144, 147, 157, and 160 each coordinate Zn(2+). Positions 332 to 336 (KFSKS) match the 'KMSKS' region motif. Lys-335 contacts ATP.

Belongs to the class-I aminoacyl-tRNA synthetase family. MetG type 1 subfamily. Monomer. The cofactor is Zn(2+).

Its subcellular location is the cytoplasm. The enzyme catalyses tRNA(Met) + L-methionine + ATP = L-methionyl-tRNA(Met) + AMP + diphosphate. Functionally, is required not only for elongation of protein synthesis but also for the initiation of all mRNA translation through initiator tRNA(fMet) aminoacylation. This chain is Methionine--tRNA ligase, found in Dehalococcoides mccartyi (strain ATCC BAA-2100 / JCM 16839 / KCTC 5957 / BAV1).